Consider the following 211-residue polypeptide: Uridine kinase (211 aa).

Residue 15–22 (GGSGSGKT) coordinates ATP.

It belongs to the uridine kinase family.

The protein localises to the cytoplasm. The enzyme catalyses uridine + ATP = UMP + ADP + H(+). The catalysed reaction is cytidine + ATP = CMP + ADP + H(+). It functions in the pathway pyrimidine metabolism; CTP biosynthesis via salvage pathway; CTP from cytidine: step 1/3. The protein operates within pyrimidine metabolism; UMP biosynthesis via salvage pathway; UMP from uridine: step 1/1. The protein is Uridine kinase of Latilactobacillus sakei subsp. sakei (strain 23K) (Lactobacillus sakei subsp. sakei).